Reading from the N-terminus, the 61-residue chain is Metallothionein-2 (61 aa).

Methionine 1 carries the post-translational modification N-acetylmethionine. Residues 1–29 form a beta region; it reads MDPNCSCAAGDSCTCAGSCKCKECKCTSC. 18 residues coordinate a divalent metal cation: cysteine 5, cysteine 7, cysteine 13, cysteine 15, cysteine 19, cysteine 21, cysteine 24, cysteine 26, cysteine 29, cysteine 33, cysteine 34, cysteine 36, cysteine 37, cysteine 41, cysteine 44, cysteine 48, cysteine 50, and cysteine 57. An alpha region spans residues 30–61; it reads KKSCCSCCPVGCAKCAQGCICKGASDKCSCCA. A Phosphoserine modification is found at serine 58. 2 residues coordinate a divalent metal cation: cysteine 59 and cysteine 60.

This sequence belongs to the metallothionein superfamily. Type 1 family. In terms of assembly, interacts with EOLA1.

Its function is as follows. Metallothioneins have a high content of cysteine residues that bind various heavy metals; these proteins are transcriptionally regulated by both heavy metals and glucocorticoids. The polypeptide is Metallothionein-2 (Homo sapiens (Human)).